Reading from the N-terminus, the 473-residue chain is Xylosidase/arabinosidase (473 aa).

Catalysis depends on Asp18, which acts as the Proton acceptor. The active-site Proton donor is Glu209.

Belongs to the glycosyl hydrolase 43 family. Homotetramer.

It carries out the reaction Hydrolysis of (1-&gt;4)-beta-D-xylans, to remove successive D-xylose residues from the non-reducing termini.. The catalysed reaction is Hydrolysis of terminal non-reducing alpha-L-arabinofuranoside residues in alpha-L-arabinosides.. This is Xylosidase/arabinosidase (xylA) from Thermoclostridium stercorarium (Clostridium stercorarium).